The sequence spans 471 residues: MKSKMAAKDQKRLDNASSSDTKIEFEFGGAPGVTLIMIGFPLLMYYMYIGAVLYDGLLPTPEDGQSWADFLSHLVSLAYTHAYPTRKAWTIYWTFLILEGAGYLYLPGVYGKGKRLPHLGGKQLPYYCSAVSSWYLTIAAALILHFTGVLKLYTLIDEFGPLMSVAICSGIFVSIVAYISALVRGVEHRMTGSHVYDFFMGAELNPRLFGWLDFKMFFEVRIPWFILFLLTLGTALKQLEEYGLVAGEVLFLLMAHFLYANACAKGEELIITSWDMYYEKWGFMLIFWNLAGVPMSYCHCTLYLAYHDPSTYHWNPWVLAVWAVAYLFMYWVWDTCNSQKNYFRAQERGVTVDRKTFPQLPWKYIENPQSIPTKTGDSILCSGWFGMARKVHYTCDVFFAISWGLITGFNSPFPWFYPCFFTVMIIHRARRDINRCRERYGEAWMEYERRVPYLFIPVSFADLPHKDKLTD.

Asparagine 15 is a glycosylation site (N-linked (GlcNAc...) asparagine). 8 consecutive transmembrane segments (helical) span residues 33 to 53, 89 to 109, 130 to 150, 159 to 179, 216 to 236, 244 to 264, 282 to 302, and 313 to 333; these read VTLIMIGFPLLMYYMYIGAVL, WTIYWTFLILEGAGYLYLPGV, AVSSWYLTIAAALILHFTGVL, FGPLMSVAICSGIFVSIVAYI, MFFEVRIPWFILFLLTLGTAL, LVAGEVLFLLMAHFLYANACA, GFMLIFWNLAGVPMSYCHCTL, and HWNPWVLAVWAVAYLFMYWVW. NADP(+)-binding positions include lysine 340, arginine 344, leucine 380, and 392-393; that span reads HY. A helical membrane pass occupies residues 397–417; sequence VFFAISWGLITGFNSPFPWFY. Residues aspartate 432, 436 to 440, and tyrosine 447 contribute to the NADP(+) site; that span reads CRERY.

Belongs to the ERG4/ERG24 family.

The protein localises to the endoplasmic reticulum membrane. The enzyme catalyses ergosterol + NADP(+) = ergosta-5,7,22,24(28)-tetraen-3beta-ol + NADPH + H(+). Its pathway is steroid metabolism; ergosterol biosynthesis. In terms of biological role, delta(24(24(1)))-sterol reductase; part of the third module of ergosterol biosynthesis pathway that includes the late steps of the pathway. Catalyzes the last step of ergosterol biosynthesis by converting ergosta-5,7,22,24(28)-tetraen-3beta-ol into ergosterol. The third module or late pathway involves the ergosterol synthesis itself through consecutive reactions that mainly occur in the endoplasmic reticulum (ER) membrane. Firstly, the squalene synthase erg9 catalyzes the condensation of 2 farnesyl pyrophosphate moieties to form squalene, which is the precursor of all steroids. Squalene synthase is crucial for balancing the incorporation of farnesyl diphosphate (FPP) into sterol and nonsterol isoprene synthesis. Secondly, squalene is converted into lanosterol by the consecutive action of the squalene epoxidase erg1 and the lanosterol synthase erg7. Then, the delta(24)-sterol C-methyltransferase erg6 methylates lanosterol at C-24 to produce eburicol. Eburicol is the substrate of the sterol 14-alpha demethylase encoded by cyp51A and cyp51B, to yield 4,4,24-trimethyl ergosta-8,14,24(28)-trienol. The C-14 reductase erg24 then reduces the C14=C15 double bond which leads to 4,4-dimethylfecosterol. A sequence of further demethylations at C-4, involving the C-4 demethylation complex containing the C-4 methylsterol oxidases erg25A or erg25B, the sterol-4-alpha-carboxylate 3-dehydrogenase erg26 and the 3-keto-steroid reductase erg27, leads to the production of fecosterol via 4-methylfecosterol. The C-8 sterol isomerase erg2 then catalyzes the reaction which results in unsaturation at C-7 in the B ring of sterols and thus converts fecosterol to episterol. The sterol-C5-desaturase erg3B then catalyzes the introduction of a C-5 double bond in the B ring to produce 5-dehydroepisterol. The 2 other sterol-C5-desaturases, erg3A and erg3C, seem to be less important in ergosterol biosynthesis. The C-22 sterol desaturase erg5 further converts 5-dehydroepisterol into ergosta-5,7,22,24(28)-tetraen-3beta-ol by forming the C-22(23) double bond in the sterol side chain. Finally, ergosta-5,7,22,24(28)-tetraen-3beta-ol is substrate of the C-24(28) sterol reductases erg4A and erg4B to produce ergosterol. Possible alternative sterol biosynthetic pathways might exist from fecosterol to ergosterol, depending on the activities of the erg3 isoforms. The sequence is that of Delta(24(24(1)))-sterol reductase erg4A from Aspergillus fumigatus (strain ATCC MYA-4609 / CBS 101355 / FGSC A1100 / Af293) (Neosartorya fumigata).